A 491-amino-acid polypeptide reads, in one-letter code: Delayed-rectifier potassium channel regulatory subunit KCNS3 (491 aa).

At 1–182 (MVFGEFFHRP…IRMENPAYCL (182 aa)) the chain is on the cytoplasmic side. A helical membrane pass occupies residues 183–204 (SAKLIAISSLSVVLASIVAMCV). Topologically, residues 205–220 (HSMSEFQNEDGEVDDP) are extracellular. The chain crosses the membrane as a helical span at residues 221–243 (VLEGVEIACIAWFTGELAIRLVA). At 244–254 (APSQKKFWKNP) the chain is on the cytoplasmic side. Residues 255-275 (LNIIDFVSIIPFYATLAVDTK) traverse the membrane as a helical segment. Over 276-285 (EEESEDIENM) the chain is Extracellular. Residues 286–306 (GKVVQILRLMRIFRILKLARH) traverse the membrane as a helical; Voltage-sensor segment. Residues 307–321 (SVGLRSLGATLRHSY) lie on the Cytoplasmic side of the membrane. A helical transmembrane segment spans residues 322–343 (HEVGLLLLFLSVGISIFSVLIY). At 344-357 (SVEKDELASSLTSI) the chain is on the extracellular side. Residues 358 to 369 (PICWWWATISMT) constitute an intramembrane region (helical). The Selectivity filter signature appears at 370-375 (TVGYGD). Residues 370-377 (TVGYGDTH) lie within the membrane without spanning it. The Extracellular portion of the chain corresponds to 378 to 384 (PVTLAGK). A helical transmembrane segment spans residues 385-413 (IIASTCIICGILVVALPITIIFNKFSKYY). Residues 414–491 (QKQKDMDVDQ…TASLENCTAK (78 aa)) are Cytoplasmic-facing.

This sequence belongs to the potassium channel family. S (TC 1.A.1.2) subfamily. Kv9.3/KCNS3 sub-subfamily. In terms of assembly, heterotetramer with KCNB1. Does not form homomultimers. As to expression, expressed in myocytes. Detected in lung, spleen, brain and heart.

The protein localises to the cell membrane. Its function is as follows. Potassium channel regulatory subunit that modulates the delayed rectifier potassium channel activity of KCNB1 by namely slowing down the deactivation and inactivation time constants. While it does not form functional channel on its own, it can form functional heterotetrameric channels with KCNB1. The polypeptide is Delayed-rectifier potassium channel regulatory subunit KCNS3 (Rattus norvegicus (Rat)).